A 456-amino-acid chain; its full sequence is uncharacterized protein (456 aa).

In terms of domain architecture, TRAM spans 3-61; it reads TIKKNEVKTGKVIDLTHEGHGVVKVDRYPIFIPNALIDEEIKFKLIKVKKNFAIGKLIE. Positions 74, 80, 83, and 162 each coordinate [4Fe-4S] cluster. Q286, Y315, E336, and D384 together coordinate S-adenosyl-L-methionine. The active-site Nucleophile is the C411.

This sequence belongs to the class I-like SAM-binding methyltransferase superfamily. RNA M5U methyltransferase family.

This is an uncharacterized protein from Staphylococcus epidermidis (strain ATCC 35984 / DSM 28319 / BCRC 17069 / CCUG 31568 / BM 3577 / RP62A).